The chain runs to 78 residues: Large ribosomal subunit protein eL38 (78 aa).

Belongs to the eukaryotic ribosomal protein eL38 family. Component of the large ribosomal subunit (LSU). Mature yeast ribosomes consist of a small (40S) and a large (60S) subunit. The 40S small subunit contains 1 molecule of ribosomal RNA (18S rRNA) and 33 different proteins (encoded by 57 genes). The large 60S subunit contains 3 rRNA molecules (25S, 5.8S and 5S rRNA) and 46 different proteins (encoded by 81 genes).

The protein resides in the cytoplasm. Its function is as follows. Component of the ribosome, a large ribonucleoprotein complex responsible for the synthesis of proteins in the cell. The small ribosomal subunit (SSU) binds messenger RNAs (mRNAs) and translates the encoded message by selecting cognate aminoacyl-transfer RNA (tRNA) molecules. The large subunit (LSU) contains the ribosomal catalytic site termed the peptidyl transferase center (PTC), which catalyzes the formation of peptide bonds, thereby polymerizing the amino acids delivered by tRNAs into a polypeptide chain. The nascent polypeptides leave the ribosome through a tunnel in the LSU and interact with protein factors that function in enzymatic processing, targeting, and the membrane insertion of nascent chains at the exit of the ribosomal tunnel. The protein is Large ribosomal subunit protein eL38 of Saccharomyces cerevisiae (strain ATCC 204508 / S288c) (Baker's yeast).